The primary structure comprises 341 residues: tRNA N6-adenosine threonylcarbamoyltransferase (341 aa).

Residues His111 and His115 each contribute to the Fe cation site. Residues Leu134–Gly138, Asp167, Gly180, and Asn276 each bind substrate. A Fe cation-binding site is contributed by Asp304.

It belongs to the KAE1 / TsaD family. The cofactor is Fe(2+).

The protein resides in the cytoplasm. It catalyses the reaction L-threonylcarbamoyladenylate + adenosine(37) in tRNA = N(6)-L-threonylcarbamoyladenosine(37) in tRNA + AMP + H(+). Required for the formation of a threonylcarbamoyl group on adenosine at position 37 (t(6)A37) in tRNAs that read codons beginning with adenine. Is involved in the transfer of the threonylcarbamoyl moiety of threonylcarbamoyl-AMP (TC-AMP) to the N6 group of A37, together with TsaE and TsaB. TsaD likely plays a direct catalytic role in this reaction. The chain is tRNA N6-adenosine threonylcarbamoyltransferase from Pseudomonas aeruginosa (strain ATCC 15692 / DSM 22644 / CIP 104116 / JCM 14847 / LMG 12228 / 1C / PRS 101 / PAO1).